A 347-amino-acid polypeptide reads, in one-letter code: GMP reductase (347 aa).

108-131 provides a ligand contact to NADP(+); that stretch reads ADFQKTKDIMALTDDLIFICIDIA. 2 residues coordinate K(+): Gly181 and Gly183. The Thioimidate intermediate role is filled by Cys186. NADP(+) is bound at residue 216 to 239; it reads IIGDGGCSCAGDVSKAFGGGADFV.

It belongs to the IMPDH/GMPR family. GuaC type 1 subfamily. As to quaternary structure, homotetramer.

It carries out the reaction IMP + NH4(+) + NADP(+) = GMP + NADPH + 2 H(+). Catalyzes the irreversible NADPH-dependent deamination of GMP to IMP. It functions in the conversion of nucleobase, nucleoside and nucleotide derivatives of G to A nucleotides, and in maintaining the intracellular balance of A and G nucleotides. The protein is GMP reductase of Aliivibrio fischeri (strain MJ11) (Vibrio fischeri).